The primary structure comprises 272 residues: uncharacterized protein (272 aa).

It belongs to the chlamydial CPn_0389/CT_041/TC_0311 family.

This is an uncharacterized protein from Chlamydia pneumoniae (Chlamydophila pneumoniae).